The chain runs to 445 residues: Argininosuccinate synthase (445 aa).

ATP contacts are provided by residues 17–25 (AFSGGLDTS) and A43. L-citrulline is bound at residue Y99. The ATP site is built by G129 and T131. The L-aspartate site is built by T131, N135, and D136. Residue N135 participates in L-citrulline binding. ATP is bound at residue D136. Positions 139 and 192 each coordinate L-citrulline. D194 contributes to the ATP binding site. T201, E203, and E280 together coordinate L-citrulline.

It belongs to the argininosuccinate synthase family. Type 2 subfamily. Homotetramer.

The protein resides in the cytoplasm. It catalyses the reaction L-citrulline + L-aspartate + ATP = 2-(N(omega)-L-arginino)succinate + AMP + diphosphate + H(+). It functions in the pathway amino-acid biosynthesis; L-arginine biosynthesis; L-arginine from L-ornithine and carbamoyl phosphate: step 2/3. This chain is Argininosuccinate synthase, found in Bordetella bronchiseptica (strain ATCC BAA-588 / NCTC 13252 / RB50) (Alcaligenes bronchisepticus).